The chain runs to 200 residues: Recombination protein RecR (200 aa).

The C4-type zinc-finger motif lies at 59–74 (CSVCFHLSADPVCDIC). Residues 82–176 (TVICVVADSR…RVTRIAFGLP (95 aa)) form the Toprim domain.

It belongs to the RecR family.

In terms of biological role, may play a role in DNA repair. It seems to be involved in an RecBC-independent recombinational process of DNA repair. It may act with RecF and RecO. This chain is Recombination protein RecR, found in Acaryochloris marina (strain MBIC 11017).